Consider the following 1073-residue polypeptide: Serine/threonine-protein kinase 11-interacting protein (1073 aa).

LRR repeat units follow at residues 166–187 (ELQT…LQLL), 189–210 (ALRV…LTTL), 212–233 (ELEY…GIFS), 236–257 (KLLT…EQLV), 258–279 (NLQH…APLS), and 283–304 (YLKK…RSAT). Disordered regions lie at residues 389 to 409 (VKVR…SQAL), 455 to 533 (SRSA…EKPE), 724 to 817 (EVSS…QGMK), and 834 to 859 (MGSY…SEET). The segment covering 515-532 (REEEADELMLGEEEDEKP) has biased composition (acidic residues). 2 stretches are compositionally biased toward polar residues: residues 779–788 (MDTSNSTRTP) and 843–859 (RGPT…SEET).

Belongs to the STK11IP family.

Its subcellular location is the cytoplasm. The protein is Serine/threonine-protein kinase 11-interacting protein (STK11IP) of Gallus gallus (Chicken).